The chain runs to 174 residues: Bifunctional protein PyrR (174 aa).

Substrate-binding positions include 38–39, 95–103, and arginine 128; these read SG and DDVLATGRT. Residues 91–103 carry the PRPP-binding motif; it reads ILLVDDVLATGRT.

Belongs to the purine/pyrimidine phosphoribosyltransferase family. PyrR subfamily.

The catalysed reaction is UMP + diphosphate = 5-phospho-alpha-D-ribose 1-diphosphate + uracil. Functionally, regulates the transcription of the pyrimidine nucleotide (pyr) operon in response to exogenous pyrimidines. In terms of biological role, also displays a weak uracil phosphoribosyltransferase activity which is not physiologically significant. The chain is Bifunctional protein PyrR from Ralstonia nicotianae (strain ATCC BAA-1114 / GMI1000) (Ralstonia solanacearum).